The following is a 511-amino-acid chain: MTNLKLLDGRSLSLHDLHRIIYEGETVGASDESMEKVKQSRKAVEQIVADEKIIYGITTGFGKFSDIFIDPDDVENLQHNLIYSHACGVGSPFPETVSRTMLVLRANALLKGFSGVRPLVIERLLALVNANIHPVIPQQGSLGASGDLAPLSHLALVLLGEGEVFYKGTKTKASFALKEEEIEPITLTAKEGLALINGTQAMTAMGVIAYLEAEKLAFQSEIIASLTMEGLRGIIDAFDEQIHFARGYVEQVDVARRMESYLQDSQLTTRQGELRVQDAYSLRCIPQVHGATWQTLRYVKEKLEIEMNAATDNPLIFDNGQKVISGGNFHGQQIALAMDFLGIAMAELANISERRIERLVNPQLNDLPPFLSAAPGVQSGVMILQYCAASLVSENKTLAHPASVDSIPSSANQEDHVSMGTIGSRHAYQIIQNVRNVLAIELICAMQAVDIRGREKMASFTKKILEKGREHVPYIDQDRMFAKDIERAAKWLKDGSWDFTKMREKERTNHY.

Positions 144–146 (ASG) form a cross-link, 5-imidazolinone (Ala-Gly). The residue at position 145 (S145) is a 2,3-didehydroalanine (Ser).

This sequence belongs to the PAL/histidase family. In terms of processing, contains an active site 4-methylidene-imidazol-5-one (MIO), which is formed autocatalytically by cyclization and dehydration of residues Ala-Ser-Gly.

It is found in the cytoplasm. The enzyme catalyses L-histidine = trans-urocanate + NH4(+). It participates in amino-acid degradation; L-histidine degradation into L-glutamate; N-formimidoyl-L-glutamate from L-histidine: step 1/3. The chain is Histidine ammonia-lyase from Halalkalibacterium halodurans (strain ATCC BAA-125 / DSM 18197 / FERM 7344 / JCM 9153 / C-125) (Bacillus halodurans).